Reading from the N-terminus, the 360-residue chain is Protein RecA (360 aa).

77 to 84 (GPESSGKT) contributes to the ATP binding site.

The protein belongs to the RecA family.

It localises to the cytoplasm. Can catalyze the hydrolysis of ATP in the presence of single-stranded DNA, the ATP-dependent uptake of single-stranded DNA by duplex DNA, and the ATP-dependent hybridization of homologous single-stranded DNAs. It interacts with LexA causing its activation and leading to its autocatalytic cleavage. The chain is Protein RecA from Chelativorans sp. (strain BNC1).